The sequence spans 620 residues: Chaperone protein HscA homolog (620 aa).

Belongs to the heat shock protein 70 family.

Chaperone involved in the maturation of iron-sulfur cluster-containing proteins. Has a low intrinsic ATPase activity which is markedly stimulated by HscB. The chain is Chaperone protein HscA homolog from Pseudomonas entomophila (strain L48).